The primary structure comprises 207 residues: Holliday junction branch migration complex subunit RuvA (207 aa).

The interval 1-65 (MIGRIRGVIL…EDAQLLYGFN (65 aa)) is domain I. A domain II region spans residues 66–143 (QKQERALFRE…KGLNGDLFEQ (78 aa)). Residues 144–158 (NGDIELPASASSKAP) form a flexible linker region. Positions 159–207 (SAADIEAEASAALIALGYKPQEAAKMISRVATAGADSETLIKEALRAAI) are domain III.

Belongs to the RuvA family. As to quaternary structure, homotetramer. Forms an RuvA(8)-RuvB(12)-Holliday junction (HJ) complex. HJ DNA is sandwiched between 2 RuvA tetramers; dsDNA enters through RuvA and exits via RuvB. An RuvB hexamer assembles on each DNA strand where it exits the tetramer. Each RuvB hexamer is contacted by two RuvA subunits (via domain III) on 2 adjacent RuvB subunits; this complex drives branch migration. In the full resolvosome a probable DNA-RuvA(4)-RuvB(12)-RuvC(2) complex forms which resolves the HJ.

It localises to the cytoplasm. In terms of biological role, the RuvA-RuvB-RuvC complex processes Holliday junction (HJ) DNA during genetic recombination and DNA repair, while the RuvA-RuvB complex plays an important role in the rescue of blocked DNA replication forks via replication fork reversal (RFR). RuvA specifically binds to HJ cruciform DNA, conferring on it an open structure. The RuvB hexamer acts as an ATP-dependent pump, pulling dsDNA into and through the RuvAB complex. HJ branch migration allows RuvC to scan DNA until it finds its consensus sequence, where it cleaves and resolves the cruciform DNA. This Proteus mirabilis (strain HI4320) protein is Holliday junction branch migration complex subunit RuvA.